Here is a 211-residue protein sequence, read N- to C-terminus: Metalloproteinase inhibitor 3 (211 aa).

The signal sequence occupies residues 1 to 23 (MTPWLGLVVLLGSWSLGDWGAEA). Position 24 (Cys-24) interacts with Zn(2+). 2 involved in metalloproteinase-binding regions span residues 24 to 27 (CTCS) and 88 to 89 (ES). 6 cysteine pairs are disulfide-bonded: Cys-24-Cys-91, Cys-26-Cys-118, Cys-36-Cys-143, Cys-145-Cys-192, Cys-150-Cys-155, and Cys-163-Cys-184. The NTR domain occupies 24-143 (CTCSPSHPQD…GLNYRYHLGC (120 aa)). Residues 105-188 (TGRVYDGKMY…SKHYACIRQK (84 aa)) are mediates interaction with EFEMP1. An N-linked (GlcNAc...) asparagine glycan is attached at Asn-207.

This sequence belongs to the protease inhibitor I35 (TIMP) family. Interacts with EFEMP1. Interacts with KDR.

It is found in the secreted. The protein localises to the extracellular space. It localises to the extracellular matrix. In terms of biological role, mediates a variety of processes including matrix regulation and turnover, inflammation, and angiogenesis, through reversible inhibition of zinc protease superfamily enzymes, primarily matrix metalloproteinases (MMPs). Regulates extracellular matrix (ECM) remodeling through inhibition of matrix metalloproteinases (MMP) including MMP-1, MMP-2, MMP-3, MMP-7, MMP-9, MMP-13, MMP-14 and MMP-15. Additionally, modulates the processing of amyloid precursor protein (APP) and apolipoprotein E receptor ApoER2 by inhibiting two alpha-secretases ADAM10 and ADAM17. Functions as a tumor suppressor and a potent inhibitor of angiogenesis. Exerts its anti-angiogenic effect by directly interacting with vascular endothelial growth factor (VEGF) receptor-2/KDR, preventing its binding to the VEGFA ligand. Selectively induces apoptosis in angiogenic endothelial cells through a caspase-independent cell death pathway. Mechanistically, inhibits matrix-induced focal adhesion kinase PTK2 tyrosine phosphorylation and association with paxillin/PXN and disrupts the incorporation of ITGB3, PTK2 and PXN into focal adhesion contacts on the matrix. This chain is Metalloproteinase inhibitor 3 (TIMP3), found in Equus caballus (Horse).